Reading from the N-terminus, the 258-residue chain is Ubiquinone/menaquinone biosynthesis C-methyltransferase UbiE (258 aa).

Residues 1-20 are disordered; the sequence is MSESRTSADGGMETSYGFRE. S-adenosyl-L-methionine contacts are provided by residues Thr81, Asp102, and 130 to 131; that span reads NA.

This sequence belongs to the class I-like SAM-binding methyltransferase superfamily. MenG/UbiE family.

It carries out the reaction a 2-demethylmenaquinol + S-adenosyl-L-methionine = a menaquinol + S-adenosyl-L-homocysteine + H(+). The enzyme catalyses a 2-methoxy-6-(all-trans-polyprenyl)benzene-1,4-diol + S-adenosyl-L-methionine = a 5-methoxy-2-methyl-3-(all-trans-polyprenyl)benzene-1,4-diol + S-adenosyl-L-homocysteine + H(+). It participates in quinol/quinone metabolism; menaquinone biosynthesis; menaquinol from 1,4-dihydroxy-2-naphthoate: step 2/2. The protein operates within cofactor biosynthesis; ubiquinone biosynthesis. In terms of biological role, methyltransferase required for the conversion of demethylmenaquinol (DMKH2) to menaquinol (MKH2) and the conversion of 2-polyprenyl-6-methoxy-1,4-benzoquinol (DDMQH2) to 2-polyprenyl-3-methyl-6-methoxy-1,4-benzoquinol (DMQH2). The protein is Ubiquinone/menaquinone biosynthesis C-methyltransferase UbiE of Rhizobium etli (strain ATCC 51251 / DSM 11541 / JCM 21823 / NBRC 15573 / CFN 42).